The sequence spans 347 residues: Hyaluronidase conohyal-ad1 (347 aa).

The N-terminal stretch at 1–18 is a signal peptide; sequence MRAVVVVTGLVVVVVTTT. A propeptide spanning residues 19–33 is cleaved from the precursor; it reads LSLQDHDVKSASSPL. The interval 27–49 is disordered; it reads KSASSPLSSSVDQGSSGDDCDEG. Positions 28-43 are enriched in low complexity; that stretch reads SASSPLSSSVDQGSSG. Cysteines 67 and 343 form a disulfide. The active-site Proton donor is Glu-150.

This sequence belongs to the glycosyl hydrolase 56 family. Contains 4 disulfide bonds. Post-translationally, is N-linked glycosylated at three positions. In terms of tissue distribution, expressed by the venom duct.

The protein resides in the secreted. The catalysed reaction is Random hydrolysis of (1-&gt;4)-linkages between N-acetyl-beta-D-glucosamine and D-glucuronate residues in hyaluronate.. Functionally, hyaluronidase catalyzes the hydrolysis of hyaluronic acid (HA), an anionic, nonsulfated glycosaminoglycan distributed widely throughout connective, epithelial, and neural tissues. In venom, they are known to enhance diffusion of the venom by degrading the extracellular matrix. This is Hyaluronidase conohyal-ad1 from Conus adamsonii (Rhododendron cone).